We begin with the raw amino-acid sequence, 471 residues long: ATP synthase subunit beta (471 aa).

158–165 (GGAGCGKT) is a binding site for ATP.

This sequence belongs to the ATPase alpha/beta chains family. As to quaternary structure, F-type ATPases have 2 components, CF(1) - the catalytic core - and CF(0) - the membrane proton channel. CF(1) has five subunits: alpha(3), beta(3), gamma(1), delta(1), epsilon(1). CF(0) has three main subunits: a(1), b(2) and c(9-12). The alpha and beta chains form an alternating ring which encloses part of the gamma chain. CF(1) is attached to CF(0) by a central stalk formed by the gamma and epsilon chains, while a peripheral stalk is formed by the delta and b chains.

The protein resides in the cell inner membrane. The catalysed reaction is ATP + H2O + 4 H(+)(in) = ADP + phosphate + 5 H(+)(out). Functionally, produces ATP from ADP in the presence of a proton gradient across the membrane. The catalytic sites are hosted primarily by the beta subunits. This chain is ATP synthase subunit beta, found in Desulfotalea psychrophila (strain LSv54 / DSM 12343).